The following is a 59-amino-acid chain: Large ribosomal subunit protein uL30 (59 aa).

This sequence belongs to the universal ribosomal protein uL30 family. In terms of assembly, part of the 50S ribosomal subunit.

This chain is Large ribosomal subunit protein uL30, found in Aeromonas hydrophila subsp. hydrophila (strain ATCC 7966 / DSM 30187 / BCRC 13018 / CCUG 14551 / JCM 1027 / KCTC 2358 / NCIMB 9240 / NCTC 8049).